We begin with the raw amino-acid sequence, 68 residues long: Large ribosomal subunit protein uL29 (68 aa).

This sequence belongs to the universal ribosomal protein uL29 family.

The chain is Large ribosomal subunit protein uL29 from Bradyrhizobium diazoefficiens (strain JCM 10833 / BCRC 13528 / IAM 13628 / NBRC 14792 / USDA 110).